The sequence spans 272 residues: Activator of basal transcription 1 (272 aa).

An N-acetylmethionine modification is found at Met-1. Basic and acidic residues predominate over residues 1 to 17 (MEAEESEKAATEQEPLK). The disordered stretch occupies residues 1-38 (MEAEESEKAATEQEPLKGTEQTLDAEEEQEESEDAACG). The segment covering 23–34 (LDAEEEQEESED) has biased composition (acidic residues). In terms of domain architecture, RRM spans 46–142 (GIVYLGHIPP…RRRSPFRYDL (97 aa)). Residues 161 to 191 (AFERQVRRQRLRAEVAQAKRETDFYLQSVER) adopt a coiled-coil conformation. Positions 197-272 (AADGDPARPD…MEGPSLVRDS (76 aa)) are disordered.

This sequence belongs to the ESF2/ABP1 family. Interacts with ESF1/ABTAP. Interacts with IGHMBP2.

The protein resides in the nucleus. The protein localises to the nucleolus. Its function is as follows. Could be a novel TATA-binding protein (TBP) which can function as a basal transcription activator. Can act as a regulator of basal transcription for class II genes. This is Activator of basal transcription 1 (ABT1) from Pongo abelii (Sumatran orangutan).